The primary structure comprises 149 residues: UPF0260 protein Avin_32930 (149 aa).

Belongs to the UPF0260 family.

The sequence is that of UPF0260 protein Avin_32930 from Azotobacter vinelandii (strain DJ / ATCC BAA-1303).